A 149-amino-acid polypeptide reads, in one-letter code: Cytochrome c' (149 aa).

An N-terminal signal peptide occupies residues 1–19 (MRRVLLATLMAALPAAAMA). Heme c contacts are provided by R29, T89, A90, C138, C141, and H142.

In terms of assembly, monomer and homodimer. Post-translationally, binds 1 heme c group covalently per subunit.

In terms of biological role, cytochrome c' is the most widely occurring bacterial c-type cytochrome. Cytochromes c' are high-spin proteins and the heme has no sixth ligand. Their exact function is not known. This chain is Cytochrome c' (cycP), found in Cereibacter sphaeroides (strain ATCC 17023 / DSM 158 / JCM 6121 / CCUG 31486 / LMG 2827 / NBRC 12203 / NCIMB 8253 / ATH 2.4.1.) (Rhodobacter sphaeroides).